A 1322-amino-acid chain; its full sequence is Flocculation protein FLO9 (1322 aa).

The N-terminal stretch at 1–24 is a signal peptide; it reads MSLAHYCLLLAIVTLLGLTNVVSA. The 176-residue stretch at 74–249 folds into the PA14 domain; that stretch reads GGQTDISIDY…GTTVSDDFEG (176 aa). 6 N-linked (GlcNAc...) asparagine glycosylation sites follow: Asn135, Asn187, Asn203, Asn257, Asn262, and Asn270. The segment at 197 to 240 is sugar recognition; the sequence is NGSPPDNITGTVYMYAGFYYPMKIVYSNAVAWGTLPISVTLPDG. Tandem repeats lie at residues 278-322, 323-367, 368-412, 413-457, 458-502, 503-547, 548-592, 593-637, 638-682, 683-727, 728-772, 773-817, and 818-862. The 13 X 45 AA approximate tandem repeats, Thr-rich stretch occupies residues 278 to 862; that stretch reads TTTEPWTGTF…KTPTTAISSS (585 aa). The N-linked (GlcNAc...) asparagine glycan is linked to Asn329. N-linked (GlcNAc...) asparagine glycosylation is found at Asn419, Asn464, Asn509, Asn554, Asn599, Asn644, Asn689, and Asn734. 2 disordered regions span residues 770–799 and 816–843; these read LIST…NGQP and VTTT…TNGQ. 2 stretches are compositionally biased toward low complexity: residues 773 to 795 and 817 to 840; these read TTTE…VTGT and TTTT…ITGT. Asn888 carries an N-linked (GlcNAc...) asparagine glycan. 3 consecutive repeat copies span residues 892 to 906, 907 to 921, and 922 to 936. Residues 892 to 936 form a 3 X 15 AA approximate repeats, Ser-rich region; that stretch reads VISSSVISSSDTSSLVISSSVTSSLVTSSPVISSSFISSPVISST. A compositionally biased stretch (low complexity) spans 950–1001; sequence SVIPTSSSTSGSSESETGSASSASSSSSISSESPKSTYSSSSLPPVTSATTS. Positions 950 to 1018 are disordered; that stretch reads SVIPTSSSTS…PPVTTTKTSE (69 aa). Over residues 1002–1018 the composition is skewed to polar residues; that stretch reads QEITSSLPPVTTTKTSE. 3 tandem repeats follow at residues 1013-1063, 1085-1135, and 1136-1186. A 3 X 51 AA approximate repeats, Thr-rich region spans residues 1013–1186; the sequence is TTKTSEQTTL…TVYSTWRPQT (174 aa). A compositionally biased stretch (polar residues) spans 1186–1196; that stretch reads TTNEQSVSSKM. Disordered regions lie at residues 1186-1221 and 1256-1284; these read TTNE…AAET and SETG…ASSM. Positions 1197 to 1221 are enriched in low complexity; sequence NSATSETTTNTGAAETTTSTGAAET. The span at 1257–1284 shows a compositional bias: polar residues; it reads ETGNTKSLTSSGLSTMSQQPRSTPASSM. Gly1299 carries GPI-anchor amidated glycine lipidation. The propeptide at 1300 to 1322 is removed in mature form; that stretch reads SANSLLAGSGLSVFIASLLLAII.

Belongs to the flocculin family. In terms of processing, the GPI-anchor is attached to the protein in the endoplasmic reticulum and serves to target the protein to the cell surface. There, the glucosamine-inositol phospholipid moiety is cleaved off and the GPI-modified mannoprotein is covalently attached via its lipidless GPI glycan remnant to the 1,6-beta-glucan of the outer cell wall layer.

Its subcellular location is the secreted. It is found in the cell wall. The protein localises to the membrane. In terms of biological role, cell wall protein that participates directly in adhesive cell-cell interactions during yeast flocculation, a reversible, asexual and Ca(2+)-dependent process in which cells adhere to form aggregates (flocs) consisting of thousands of cells. The lectin-like protein sticks out of the cell wall of flocculent cells and selectively binds mannose residues in the cell walls of adjacent cells. This chain is Flocculation protein FLO9 (FLO9), found in Saccharomyces cerevisiae (strain ATCC 204508 / S288c) (Baker's yeast).